The chain runs to 364 residues: MAQQWSLQRLAGRHPQDSYEDSTQSSIFTYTNSNSTRGPFEGPNYHIAPRWVYHLTSVWMIFVVIASVFTNGLVLAATMKFKKLRHPLNWILVNLAVADLAETVIASTISVVNQVYGYFVLGHPMCVLEGYTVSLCGITGLWSLAIISWERWMVVCKPFGNVRFDAKLAIVGIAFSWIWAAVWTAPPIFGWSRYWPHGLKTSCGPDVFSGSSYPGVQSYMIVLMVTCCITPLSIIVLCYLQVWLAIRAVAKQQKESESTQKAEKEVTRMVVVMVLAFCFCWGPYAFFACFAAANPGYPFHPLMAALPAFFAKSATIYNPVIYVFMNRQFRNCILQLFGKKVDDGSELSSASKTEVSSVSSVSPA.

Residues 1 to 23 (MAQQWSLQRLAGRHPQDSYEDST) are disordered. Residues 1–52 (MAQQWSLQRLAGRHPQDSYEDSTQSSIFTYTNSNSTRGPFEGPNYHIAPRWV) are Extracellular-facing. The interval 17-43 (DSYEDSTQSSIFTYTNSNSTRGPFEGP) is required for 11-cis-retinal regeneration. N-linked (GlcNAc...) asparagine glycosylation occurs at Asn34. The helical transmembrane segment at 53-77 (YHLTSVWMIFVVIASVFTNGLVLAA) threads the bilayer. At 78–89 (TMKFKKLRHPLN) the chain is on the cytoplasmic side. A helical transmembrane segment spans residues 90-115 (WILVNLAVADLAETVIASTISVVNQV). The Extracellular segment spans residues 116 to 129 (YGYFVLGHPMCVLE). A disulfide bridge connects residues Cys126 and Cys203. The chain crosses the membrane as a helical span at residues 130–149 (GYTVSLCGITGLWSLAIISW). Residues 150 to 168 (ERWMVVCKPFGNVRFDAKL) lie on the Cytoplasmic side of the membrane. The chain crosses the membrane as a helical span at residues 169-192 (AIVGIAFSWIWAAVWTAPPIFGWS). Residues 193-218 (RYWPHGLKTSCGPDVFSGSSYPGVQS) are Extracellular-facing. A helical transmembrane segment spans residues 219–246 (YMIVLMVTCCITPLSIIVLCYLQVWLAI). The Cytoplasmic segment spans residues 247–268 (RAVAKQQKESESTQKAEKEVTR). Residues 269 to 292 (MVVVMVLAFCFCWGPYAFFACFAA) traverse the membrane as a helical segment. Residues 293-300 (ANPGYPFH) lie on the Extracellular side of the membrane. A helical membrane pass occupies residues 301–325 (PLMAALPAFFAKSATIYNPVIYVFM). The residue at position 312 (Lys312) is an N6-(retinylidene)lysine. At 326–364 (NRQFRNCILQLFGKKVDDGSELSSASKTEVSSVSSVSPA) the chain is on the cytoplasmic side.

The protein belongs to the G-protein coupled receptor 1 family. Opsin subfamily. Post-translationally, N-glycosylated. O-glycosylated. In terms of processing, phosphorylated on some or all of the serine and threonine residues present in the C-terminal region.

It localises to the cell membrane. Its function is as follows. Visual pigments are the light-absorbing molecules that mediate vision. They consist of an apoprotein, opsin, covalently linked to cis-retinal. This chain is Medium-wave-sensitive opsin 2, found in Homo sapiens (Human).